Reading from the N-terminus, the 383-residue chain is ATP phosphoribosyltransferase regulatory subunit (383 aa).

Belongs to the class-II aminoacyl-tRNA synthetase family. HisZ subfamily. As to quaternary structure, heteromultimer composed of HisG and HisZ subunits.

Its subcellular location is the cytoplasm. It participates in amino-acid biosynthesis; L-histidine biosynthesis; L-histidine from 5-phospho-alpha-D-ribose 1-diphosphate: step 1/9. In terms of biological role, required for the first step of histidine biosynthesis. May allow the feedback regulation of ATP phosphoribosyltransferase activity by histidine. In Cupriavidus necator (strain ATCC 17699 / DSM 428 / KCTC 22496 / NCIMB 10442 / H16 / Stanier 337) (Ralstonia eutropha), this protein is ATP phosphoribosyltransferase regulatory subunit.